The sequence spans 417 residues: Solanesyl diphosphate synthase 2, chloroplastic (417 aa).

The transit peptide at 1 to 60 (MMMSCRNIDLGTSVLDHSCSSSSTSRRFLFGNSSKTVCMIGGRSCVGNLVFLRRDLATCR) directs the protein to the chloroplast. Isopentenyl diphosphate contacts are provided by Lys-137, Arg-140, and His-175. Mg(2+) contacts are provided by Asp-182 and Asp-186. Residue Arg-191 participates in an all-trans-polyprenyl diphosphate binding. Residue Arg-192 participates in isopentenyl diphosphate binding. Lys-268, Thr-269, Gln-306, and Lys-323 together coordinate an all-trans-polyprenyl diphosphate.

Belongs to the FPP/GGPP synthase family. As to quaternary structure, homodimer. Interacts with FBN5. Mg(2+) is required as a cofactor. Higher expression in leaves than in roots.

The protein localises to the plastid. Its subcellular location is the chloroplast. The catalysed reaction is 5 isopentenyl diphosphate + (2E,6E,10E)-geranylgeranyl diphosphate = all-trans-nonaprenyl diphosphate + 5 diphosphate. In terms of biological role, involved in providing solanesyl diphosphate for plastoquinone-9 (PQ-9) formation in plastids. Catalyzes the elongation of the prenyl side chain of PQ-9 in plastids. Contributes to the biosynthesis of plastochromanol-8 (PC-8) in plastids. Does not contribute to the synthesis of tocopherol or ubiquinone. PQ-9 and PC-8 are lipophilic antioxidants that act as protectant against photooxidative stress under high light stress conditions. Prefers geranylgeranyl diphosphate to farnesyl diphosphate as substrate. No activity with geranyl diphosphate or dimethylallyl diphosphate as substrate. This Arabidopsis thaliana (Mouse-ear cress) protein is Solanesyl diphosphate synthase 2, chloroplastic.